Reading from the N-terminus, the 238-residue chain is Ribonuclease 3 (238 aa).

The 126-residue stretch at 11 to 136 (RARLEAAIGY…LIAAIYLDGG (126 aa)) folds into the RNase III domain. Residue Glu49 coordinates Mg(2+). Asp53 is a catalytic residue. Mg(2+) is bound by residues Asp122 and Glu125. Glu125 is a catalytic residue. In terms of domain architecture, DRBM spans 161–230 (DAKTELQEWA…AMKLLEREGV (70 aa)). The segment covering 180-193 (YRTEDRSGPDHDPR) has biased composition (basic and acidic residues). The tract at residues 180–215 (YRTEDRSGPDHDPRFTVTVEVDGIDPETGVDRSKRG) is disordered.

Belongs to the ribonuclease III family. Homodimer. Mg(2+) is required as a cofactor.

The protein localises to the cytoplasm. The enzyme catalyses Endonucleolytic cleavage to 5'-phosphomonoester.. Digests double-stranded RNA. Involved in the processing of primary rRNA transcript to yield the immediate precursors to the large and small rRNAs (23S and 16S). Processes some mRNAs, and tRNAs when they are encoded in the rRNA operon. Processes pre-crRNA and tracrRNA of type II CRISPR loci if present in the organism. This Sinorhizobium medicae (strain WSM419) (Ensifer medicae) protein is Ribonuclease 3.